The primary structure comprises 117 residues: Immunoglobulin heavy variable 3-48 (117 aa).

Residues 1 to 19 (MELGLCWVFLVAILEGVQC) form the signal peptide. The framework-1 stretch occupies residues 20-44 (EVQLVESGGGLVQPGGSLRLSCAAS). Residues 20 to 117 (EVQLVESGGG…EDTAVYYCAR (98 aa)) enclose the Ig-like domain. Cys41 and Cys115 are joined by a disulfide. The segment at 45–52 (GFTFSSYE) is complementarity-determining-1. The framework-2 stretch occupies residues 53–69 (MNWVRQAPGKGLEWVSY). The complementarity-determining-2 stretch occupies residues 70-77 (ISSSGSTI). The tract at residues 78–115 (YYADSVKGRFTISRDNAKNSLYLQMNSLRAEDTAVYYC) is framework-3. The tract at residues 116-117 (AR) is complementarity-determining-3.

In terms of assembly, immunoglobulins are composed of two identical heavy chains and two identical light chains; disulfide-linked. In terms of processing, the N-terminus is blocked.

Its subcellular location is the secreted. It is found in the cell membrane. In terms of biological role, v region of the variable domain of immunoglobulin heavy chains that participates in the antigen recognition. Immunoglobulins, also known as antibodies, are membrane-bound or secreted glycoproteins produced by B lymphocytes. In the recognition phase of humoral immunity, the membrane-bound immunoglobulins serve as receptors which, upon binding of a specific antigen, trigger the clonal expansion and differentiation of B lymphocytes into immunoglobulins-secreting plasma cells. Secreted immunoglobulins mediate the effector phase of humoral immunity, which results in the elimination of bound antigens. The antigen binding site is formed by the variable domain of one heavy chain, together with that of its associated light chain. Thus, each immunoglobulin has two antigen binding sites with remarkable affinity for a particular antigen. The variable domains are assembled by a process called V-(D)-J rearrangement and can then be subjected to somatic hypermutations which, after exposure to antigen and selection, allow affinity maturation for a particular antigen. The protein is Immunoglobulin heavy variable 3-48 of Homo sapiens (Human).